Consider the following 159-residue polypeptide: SsrA-binding protein (159 aa).

Belongs to the SmpB family.

It localises to the cytoplasm. In terms of biological role, required for rescue of stalled ribosomes mediated by trans-translation. Binds to transfer-messenger RNA (tmRNA), required for stable association of tmRNA with ribosomes. tmRNA and SmpB together mimic tRNA shape, replacing the anticodon stem-loop with SmpB. tmRNA is encoded by the ssrA gene; the 2 termini fold to resemble tRNA(Ala) and it encodes a 'tag peptide', a short internal open reading frame. During trans-translation Ala-aminoacylated tmRNA acts like a tRNA, entering the A-site of stalled ribosomes, displacing the stalled mRNA. The ribosome then switches to translate the ORF on the tmRNA; the nascent peptide is terminated with the 'tag peptide' encoded by the tmRNA and targeted for degradation. The ribosome is freed to recommence translation, which seems to be the essential function of trans-translation. The sequence is that of SsrA-binding protein from Mycobacteroides abscessus (strain ATCC 19977 / DSM 44196 / CCUG 20993 / CIP 104536 / JCM 13569 / NCTC 13031 / TMC 1543 / L948) (Mycobacterium abscessus).